The chain runs to 267 residues: Small ribosomal subunit protein uS3 (267 aa).

The KH type-2 domain maps to 38-106 (IRKLLATGME…QVQLNILEVK (69 aa)). Residues 215–267 (TAASAPAGDRDRPRRERPSRPRRSGSTGTTATSTEAGRAATAVVEAPAENQEG) are disordered. Residues 222-233 (GDRDRPRRERPS) are compositionally biased toward basic and acidic residues. The segment covering 238–256 (SGSTGTTATSTEAGRAATA) has biased composition (low complexity).

It belongs to the universal ribosomal protein uS3 family. In terms of assembly, part of the 30S ribosomal subunit. Forms a tight complex with proteins S10 and S14.

Functionally, binds the lower part of the 30S subunit head. Binds mRNA in the 70S ribosome, positioning it for translation. This is Small ribosomal subunit protein uS3 from Nocardia farcinica (strain IFM 10152).